The primary structure comprises 245 residues: Histone deacetylase HDT1 (245 aa).

Methionine 1 is subject to N-acetylmethionine. Required to repress transcription regions lie at residues 2–5 (EFWG) and 101–162 (GYSE…EEEE). A disordered region spans residues 99 to 245 (PQGYSEEEEE…HNKAKHAAAK (147 aa)). Residues 103–113 (SEEEEEEEEEV) show a composition bias toward acidic residues. Positions 114-124 (PAGNAAKAVAK) are enriched in low complexity. The segment covering 137-162 (DDEEDESDSDGMDEDDSDGEDSEEEE) has biased composition (acidic residues). Over residues 178–195 (TTPKAPVSAKKAKVAVTP) the composition is skewed to low complexity. Residues 208–234 (ANQSPKSASQVSCGSCKKTFNSGNALE) show a composition bias toward polar residues. Serine 211 carries the phosphoserine modification. The C2H2-type zinc-finger motif lies at 218–241 (VSCGSCKKTFNSGNALESHNKAKH).

The protein belongs to the histone deacetylase HD2 family. Interacts with DNMT2. Interacts with DEK3. In terms of tissue distribution, expressed in leaves, roots, stems, young plantlets, flowers and siliques. Highest levels in ovules, embryos, shoot apical meristems and first leaves. Also expressed in somatic embryos.

It is found in the nucleus. Its subcellular location is the nucleolus. Its function is as follows. Probably mediates the deacetylation of lysine residues on the N-terminal part of the core histones (H2A, H2B, H3 and H4). Histone deacetylation gives a tag for epigenetic repression and plays an important role in transcriptional regulation, cell cycle progression and developmental events. Required for histone H3 'Lys-9' deacetylation. Involved in rRNA gene silencing in nucleolar dominance. Seems to be implicated in the regulation of genes involved in seeds development. The protein is Histone deacetylase HDT1 of Arabidopsis thaliana (Mouse-ear cress).